The sequence spans 323 residues: Mitochondrial glutamate carrier 1 (323 aa).

Solcar repeat units lie at residues 6-93, 101-214, and 223-312; these read ISLP…FRHQ, LTLL…LNQL, and SPFY…GIAE. 6 helical membrane passes run 12–32, 62–82, 107–127, 189–209, 223–243, and 292–312; these read LINGGIAGLIGVTCVFPIDLA, YFGMYRGAAVNLTLVTPEKAI, MLAGCGAGTCQVIVTTPMEML, GLGATLLRDVPFSVVYFPLFA, SPFYVSFLAGCVAGSAAAVAV, and ALVIAPLFGIAQVVYFLGIAE.

It belongs to the mitochondrial carrier (TC 2.A.29) family. In terms of tissue distribution, expressed at high levels in brain, liver, and pancreas.

Its subcellular location is the mitochondrion inner membrane. The enzyme catalyses L-glutamate(in) + H(+)(in) = L-glutamate(out) + H(+)(out). Functionally, mitochondrial glutamate/H(+) symporter. Responsible for the transport of glutamate from the cytosol into the mitochondrial matrix with the concomitant import of a proton. Plays a role in the control of glucose-stimulated insulin secretion. The sequence is that of Mitochondrial glutamate carrier 1 from Homo sapiens (Human).